The primary structure comprises 364 residues: MHFLQNSLIAAAMGAALVAAAPAADLDARSSCTFTSASAAKSGASKCSTVTLKSIQVPAGETLDLTGLKSGATVIFEGETTFGYKEWKGPLISMSGDKITVKQASGAKINCDGARWWDTKGSNGGKTKPKFFSAHKLNNSKIQGLKIYNTPVQGFSIQSDHLTISDVTIDNSAGTSKGHNTDAFDIGSSTYITIDGATVYNQDDCIAINSGEHITFTNGYCSGGHGLSIGSVGGRSDNTVKSVTISNSKVVDSQNGVRIKTVYKATGSVTDVTFQDIELSGITKYGLIVEQDYENGSPTGTPTNGVEVEDITFKKITGSVDSSATRVNILCGSGSCKDWTWSGVDITGGKKSSKCKNVPSGASC.

Positions M1–A20 are cleaved as a signal peptide. Positions A21–R29 are excised as a propeptide. C32 and C47 are disulfide-bonded. N-linked (GlcNAc...) asparagine glycosylation occurs at N138. PbH1 repeat units follow at residues S159 to S188, S189 to S210, G211 to S231, V240 to T261, V269 to Q291, and T303 to G348. The Proton donor role is filled by D203. Residues C205 and C221 are joined by a disulfide bond. The active site involves H225. 2 disulfide bridges follow: C331–C336 and C355–C364.

Belongs to the glycosyl hydrolase 28 family.

It localises to the secreted. The catalysed reaction is (1,4-alpha-D-galacturonosyl)n+m + H2O = (1,4-alpha-D-galacturonosyl)n + (1,4-alpha-D-galacturonosyl)m.. Functionally, involved in maceration and soft-rotting of plant tissue. Hydrolyzes the 1,4-alpha glycosidic bonds of de-esterified pectate in the smooth region of the plant cell wall. This Emericella nidulans (strain FGSC A4 / ATCC 38163 / CBS 112.46 / NRRL 194 / M139) (Aspergillus nidulans) protein is Endopolygalacturonase B (pgaB).